We begin with the raw amino-acid sequence, 370 residues long: UDP-N-acetylglucosamine--N-acetylmuramyl-(pentapeptide) pyrophosphoryl-undecaprenol N-acetylglucosamine transferase (370 aa).

UDP-N-acetyl-alpha-D-glucosamine is bound by residues 10–12 (TGG), Asn-126, Ser-200, Ile-255, and Gln-300.

It belongs to the glycosyltransferase 28 family. MurG subfamily.

The protein resides in the cell membrane. The catalysed reaction is Mur2Ac(oyl-L-Ala-gamma-D-Glu-L-Lys-D-Ala-D-Ala)-di-trans,octa-cis-undecaprenyl diphosphate + UDP-N-acetyl-alpha-D-glucosamine = beta-D-GlcNAc-(1-&gt;4)-Mur2Ac(oyl-L-Ala-gamma-D-Glu-L-Lys-D-Ala-D-Ala)-di-trans,octa-cis-undecaprenyl diphosphate + UDP + H(+). It participates in cell wall biogenesis; peptidoglycan biosynthesis. In terms of biological role, cell wall formation. Catalyzes the transfer of a GlcNAc subunit on undecaprenyl-pyrophosphoryl-MurNAc-pentapeptide (lipid intermediate I) to form undecaprenyl-pyrophosphoryl-MurNAc-(pentapeptide)GlcNAc (lipid intermediate II). The chain is UDP-N-acetylglucosamine--N-acetylmuramyl-(pentapeptide) pyrophosphoryl-undecaprenol N-acetylglucosamine transferase from Lactobacillus gasseri (strain ATCC 33323 / DSM 20243 / BCRC 14619 / CIP 102991 / JCM 1131 / KCTC 3163 / NCIMB 11718 / NCTC 13722 / AM63).